The following is an 801-amino-acid chain: MSSLSQSPPPPEMDIQPPALVNDDPSTYSSALWDWGDLLDFAADERLLVDQIHFPPVLSPPLPPLIPTQTPAESELDPSPEESGSGSDRVRKRDPRLICSNFIEGMLPCSCPELDQKLEDAELPKKKRVRGGSGVARCQVPDCEADISELKGYHKRHRVCLRCATASFVVLDGENKRYCQQCGKFHLLPDFDEGKRSCRRKLERHNNRRKRKPVDKGGVAAEQQQVLSQNDNSVIDVEDGKDITCSSDQRAEEEPSLIFEDRHITTQGSVPFTRSINADNFVSVTGSGEAQPDEGMNDTKFERSPSNGDNKSAYSTVCPTGRISFKLYDWNPAEFPRRLRHQIFQWLANMPVELEGYIRPGCTILTVFIAMPEIMWAKLSKDPVAYLDEFILKPGKMLFGRGSMTVYLNNMIFRLIKGGTTLKRVDVKLESPKLQFVYPTCFEAGKPIELVVCGQNLLQPKCRFLVSFSGKYLPHNYSVVPAPDQDGKRSCNNKFYKINIVNSDPSLFGPAFVEVENESGLSNFIPLIIGDAAVCSEMKLIEQKFNATLFPEGQEVTACSSLTCCCRDFGERQSTFSGLLLDIAWSVKVPSAERTEQPVNRCQIKRYNRVLNYLIQNNSASILGNVLHNLETLVKKMEPDSLVHCTCDCDVRLLHENMDLASDIHRKHQSPIESKVNPPSSGCCCVSSQKDIPSRILNFNKDPEAGLDCKERIQADCSPDSGGKETDPLLNKEVVMNVNDIGDWPRKSCIKTHSALAFRSRQTMFLIATFAVCFAVCAVLYHPNKVTQLAVAIRMRLVHKI.

Disordered stretches follow at residues 1 to 23 (MSSL…LVND) and 59 to 91 (SPPL…DRVR). An SBP-type; atypical zinc finger spans residues 135–212 (VARCQVPDCE…ERHNNRRKRK (78 aa)). Cysteine 138, cysteine 143, cysteine 160, cysteine 163, cysteine 179, cysteine 182, histidine 186, and cysteine 198 together coordinate Zn(2+). Residues 195–211 (KRSCRRKLERHNNRRKR) carry the Bipartite nuclear localization signal motif. A compositionally biased stretch (basic residues) spans 203–213 (ERHNNRRKRKP). Disordered regions lie at residues 203–258 (ERHN…PSLI) and 286–313 (GSGE…NKSA). A compositionally biased stretch (polar residues) spans 222–233 (EQQQVLSQNDNS). The segment covering 249 to 258 (QRAEEEPSLI) has biased composition (basic and acidic residues). Residues 304–313 (SPSNGDNKSA) show a composition bias toward polar residues.

As to quaternary structure, homodimer. Interacts with KIN17. Interacts with HY5. The cofactor is Zn(2+). Expressed in roots rosette leaves, cauline leaves, stems, flowers and siliques.

It is found in the nucleus speckle. Transcription factor that participates in reprogramming global gene expression during copper deficiency in order to improve the metal uptake and prioritize its distribution to copper proteins of major importance. Binds directly to 5'-GTAC-3' motifs in the microRNA (miRNA) promoter of the stress-responsive miRNAs miR398b and miR398c to activate their transcription. During copper deficiency, activates the copper transporters COPT1 and COPT2, and the copper chaperone CCH, directly or indirectly via miRNAs. Required for the expression of the miRNAs miR397, miR408 and miR857. Acts coordinately with HY5 to regulate miR408 and its target genes in response to changes in light and copper conditions. Activates miR857 and its target genes in response to low copper conditions. Involved in cadmium stress response by regulating miR397a, miR398b, miR398c and miR857. Required for iron homeostasis during copper deficiency. The chain is Squamosa promoter-binding-like protein 7 (SPL7) from Arabidopsis thaliana (Mouse-ear cress).